Consider the following 266-residue polypeptide: Protein-ADP-ribose hydrolase (266 aa).

The 192-residue stretch at 74–265 (TDLKDLKPIK…LYKEAFNRDA (192 aa)) folds into the Macro domain. Positions 93, 94, and 107 each coordinate ADP-D-ribose. Zn(2+)-binding residues include C113, H118, and C120. Residues C120, I121, D122, S212, T213, G214, and F216 each coordinate ADP-D-ribose.

The protein belongs to the MacroD-type family. Zn-Macro subfamily. The cofactor is Zn(2+).

The enzyme catalyses 4-O-(ADP-D-ribosyl)-L-aspartyl-[protein] + H2O = L-aspartyl-[protein] + ADP-D-ribose + H(+). Functionally, ADP-ribosylhydrolase that specifically reverses the SirTM-mediated mono-ADP-ribosylation at an asparatate residue of GcvH-L, by releasing ADP-ribose from the target protein. May play a role in the regulation of the response to host-induced oxidative stress. The chain is Protein-ADP-ribose hydrolase from Staphylococcus aureus (strain MSSA476).